The chain runs to 83 residues: RNA-binding protein Hfq (83 aa).

The Sm domain maps to 11-71 (DTFLNFVRKN…ISTIMPGQPI (61 aa)).

Belongs to the Hfq family. As to quaternary structure, homohexamer.

Its function is as follows. RNA chaperone that binds small regulatory RNA (sRNAs) and mRNAs to facilitate mRNA translational regulation in response to envelope stress, environmental stress and changes in metabolite concentrations. Also binds with high specificity to tRNAs. In Methylocella silvestris (strain DSM 15510 / CIP 108128 / LMG 27833 / NCIMB 13906 / BL2), this protein is RNA-binding protein Hfq.